The sequence spans 466 residues: Fumarate hydratase class II (466 aa).

Residues 100–102, arginine 128, 131–134, 141–143, and threonine 189 contribute to the substrate site; these read SGT, HPND, and SSN. Positions 122–137 are enriched in basic and acidic residues; that stretch reads GERGERRKVHPNDDVN. The tract at residues 122-143 is disordered; that stretch reads GERGERRKVHPNDDVNKGQSSN. Residue histidine 190 is the Proton donor/acceptor of the active site. The active site involves serine 320. Substrate-binding positions include serine 321 and 326–328; that span reads KVN.

This sequence belongs to the class-II fumarase/aspartase family. Fumarase subfamily. Homotetramer.

It localises to the cytoplasm. The catalysed reaction is (S)-malate = fumarate + H2O. The protein operates within carbohydrate metabolism; tricarboxylic acid cycle; (S)-malate from fumarate: step 1/1. Functionally, involved in the TCA cycle. Catalyzes the stereospecific interconversion of fumarate to L-malate. The chain is Fumarate hydratase class II from Myxococcus xanthus (strain DK1622).